A 476-amino-acid chain; its full sequence is Membrane-bound lytic murein transglycosylase F (476 aa).

The N-terminal stretch at 1–22 (MTRFLFALILGFLLTACQQVTV) is a signal peptide. The segment at 23–257 (DETEFVPKKL…HLNEKYFGHV (235 aa)) is non-LT domain. Positions 258–476 (KRFDYVDTRA…AGTLSPEQPK (219 aa)) are LT domain. E302 is a catalytic residue. The disordered stretch occupies residues 446 to 476 (SKQQNPEEEPSDLASEEPAIPAGTLSPEQPK). Residues 451 to 460 (PEEEPSDLAS) show a composition bias toward acidic residues.

The protein in the N-terminal section; belongs to the bacterial solute-binding protein 3 family. In the C-terminal section; belongs to the transglycosylase Slt family.

It is found in the cell outer membrane. The enzyme catalyses Exolytic cleavage of the (1-&gt;4)-beta-glycosidic linkage between N-acetylmuramic acid (MurNAc) and N-acetylglucosamine (GlcNAc) residues in peptidoglycan, from either the reducing or the non-reducing ends of the peptidoglycan chains, with concomitant formation of a 1,6-anhydrobond in the MurNAc residue.. In terms of biological role, murein-degrading enzyme that degrades murein glycan strands and insoluble, high-molecular weight murein sacculi, with the concomitant formation of a 1,6-anhydromuramoyl product. Lytic transglycosylases (LTs) play an integral role in the metabolism of the peptidoglycan (PG) sacculus. Their lytic action creates space within the PG sacculus to allow for its expansion as well as for the insertion of various structures such as secretion systems and flagella. In Shewanella baltica (strain OS155 / ATCC BAA-1091), this protein is Membrane-bound lytic murein transglycosylase F.